Reading from the N-terminus, the 459-residue chain is Exodeoxyribonuclease 7 large subunit (459 aa).

This sequence belongs to the XseA family. As to quaternary structure, heterooligomer composed of large and small subunits.

The protein resides in the cytoplasm. It carries out the reaction Exonucleolytic cleavage in either 5'- to 3'- or 3'- to 5'-direction to yield nucleoside 5'-phosphates.. In terms of biological role, bidirectionally degrades single-stranded DNA into large acid-insoluble oligonucleotides, which are then degraded further into small acid-soluble oligonucleotides. The chain is Exodeoxyribonuclease 7 large subunit from Pseudomonas aeruginosa (strain UCBPP-PA14).